The chain runs to 779 residues: Angiomotin-like protein 2 (779 aa).

Disordered regions lie at residues 41-215 and 263-308; these read GGAG…QYPH and QYLQ…TSGS. 2 stretches are compositionally biased toward basic and acidic residues: residues 100 to 112 and 141 to 152; these read KGEE…EAKA and RRQDEALRELRH. The required for interaction with CDH5 stretch occupies residues 101–307; that stretch reads GEELPTYEEA…SAQASSATSG (207 aa). Position 107 is a phosphotyrosine; by FGFR1 (Tyr107). A compositionally biased stretch (low complexity) spans 160 to 169; the sequence is ERLLQLSLER. Residues 177-193 are compositionally biased toward polar residues; the sequence is HMSSSHSFPQLARNQQG. The segment covering 196-213 has biased composition (pro residues); it reads LRGPPAEGPESRGPPPQY. A required for interaction with CDH1 region spans residues 220-307; that stretch reads HETTTAVTDP…SAQASSATSG (88 aa). The span at 298–308 shows a compositional bias: low complexity; sequence SAQASSATSGS. Residues 308-581 are a coiled coil; sequence SAHLAQMEAV…KYLEERAMRQ (274 aa). Residues Lys347 and Lys408 each participate in a glycyl lysine isopeptide (Lys-Gly) (interchain with G-Cter in ubiquitin) cross-link. Disordered stretches follow at residues 522–543 and 679–753; these read RAQQ…SPEL and TQGW…GCSS. Residues 530–539 show a composition bias toward gly residues; the sequence is APGGSSGSGG. Polar residues-rich tracts occupy residues 680–690 and 725–740; these read QGWQGLSSSER and DGST…TSTC. Phosphoserine occurs at positions 759 and 762. The PDZ-binding motif lies at 776–779; it reads EILI.

It belongs to the angiomotin family. Part of a complex composed of AMOTL2, MAGI1 and CDH5, within the complex AMOTL2 acts as a scaffold protein for the interaction of MAGI1 with CDH5. The complex is required for coupling actin fibers to cell junctions in endothelial cells. Within the complex AMOTL2 (via its N-terminus) interacts with CDH5. Interacts (via N-terminus) with MAGI1. Interacts (via N-terminus) with ACTB; the interaction facilitates binding of cell junction complexes to actin fibers in endothelial cells. Interacts with CDH1; the interaction may facilitate binding of radial actin fibers to cell junction complexes. Interacts with SRC. Interacts with YAP1; the interaction is required for ubiquitination of AMOTL2 and localization of YAP1 to tight junctions. Interacts with WWP1; the interaction facilitates WWP1 interaction with the Crumbs complex and subsequent WWP1 translocation to the plasma membrane. WWP1 interaction with the Crumbs complex promotes WWP1 monoubiquitination of AMOTL2 which subsequently activates the Hippo signaling pathway. When ubiquitinated interacts with LATS2 (via UBA domain); the interaction promotes LATS2 phosphorylation of YAP1. Interacts (via PPXY motif) with WWTR1/TAZ (via WW domain); the interaction promotes WWTR1/TAZ localization to the cytoplasm and thereby inhibition of its transcriptional properties. Interacts with PHLDB2; interaction may facilitate PHLDB2 localization to the myotube podosome cortex that surrounds the core. Monoubiquitinated at Lys-347 and Lys-408 by Crumbs complex-bound WWP1. De-ubiquitinated at Lys-347 and Lys-408 by USP9X; the interaction may be promoted by cell contact inhibition. Deubiquitination of AMOTL2 negatively regulates Hippo signaling activation. Post-translationally, phosphorylation at Tyr-107 is necessary for efficient binding to SRC and synergistically functioning with SRC to activate the downstream MAPK pathway.

It localises to the recycling endosome. The protein resides in the cytoplasm. Its subcellular location is the cell projection. It is found in the podosome. The protein localises to the cell junction. Functionally, regulates the translocation of phosphorylated SRC to peripheral cell-matrix adhesion sites. Required for proper architecture of actin filaments. Plays a role in coupling actin fibers to cell junctions in endothelial cells and is therefore required for correct endothelial cell morphology via facilitating transcellular transmission of mechanical force resulting in endothelial cell elongation. Required for the anchoring of radial actin fibers to CDH1 junction complexes at the cell membrane which facilitates organization of radial actin fiber structure and cellular response to contractile forces. This contributes to maintenance of cell area, size, shape, epithelial sheet organization and trophectoderm cell properties that facilitate blastocyst zona hatching. Inhibits the Wnt/beta-catenin signaling pathway, probably by recruiting CTNNB1 to recycling endosomes and hence preventing its translocation to the nucleus. Participates in angiogenesis. Activates the Hippo signaling pathway in response to cell contact inhibition via interaction with and ubiquitination by Crumbs complex-bound WWP1. Ubiquitinated AMOTL2 then interacts with LATS2 which in turn phosphorylates YAP1, excluding it from the nucleus and localizing it to the cytoplasm and tight junctions, therefore ultimately repressing YAP1-driven transcription of target genes. Acts to inhibit WWTR1/TAZ transcriptional coactivator activity via sequestering WWTR1/TAZ in the cytoplasm and at tight junctions. Regulates the size and protein composition of the podosome cortex and core at myofibril neuromuscular junctions. Selectively promotes FGF-induced MAPK activation through SRC. May play a role in the polarity, proliferation and migration of endothelial cells. In Homo sapiens (Human), this protein is Angiomotin-like protein 2.